We begin with the raw amino-acid sequence, 288 residues long: Histone-lysine N-methyltransferase Suv4-20 (288 aa).

Positions 128–238 constitute an SET domain; the sequence is QECKRYSQEG…PGDEITCFYG (111 aa).

This sequence belongs to the class V-like SAM-binding methyltransferase superfamily. Histone-lysine methyltransferase family. Suvar4-20 subfamily.

It is found in the nucleus. Its subcellular location is the chromosome. It carries out the reaction N(6)-methyl-L-lysyl(20)-[histone H4] + S-adenosyl-L-methionine = N(6),N(6)-dimethyl-L-lysyl(20)-[histone H4] + S-adenosyl-L-homocysteine + H(+). It catalyses the reaction N(6),N(6)-dimethyl-L-lysyl(20)-[histone H4] + S-adenosyl-L-methionine = N(6),N(6),N(6)-trimethyl-L-lysyl(20)-[histone H4] + S-adenosyl-L-homocysteine + H(+). Histone methyltransferase that specifically di- and trimethylates 'Lys-20' of histone H4 (H4K20me2/me3). H4 'Lys-20' trimethylation represents a specific tag for epigenetic transcriptional repression. Contributes to dosage compensation of X chromosome-relative to autosome-linked gene expression, possibly by converting H4K20me1 to H4K20m2/me3 on autosomes. Involved in the regulation of growth and body fat metabolism downstream of the TOR complex 2 pathway. The sequence is that of Histone-lysine N-methyltransferase Suv4-20 (set-4) from Caenorhabditis elegans.